The sequence spans 352 residues: Ion-translocating oxidoreductase complex subunit D (352 aa).

The next 5 membrane-spanning stretches (helical) occupy residues 20 to 40 (IMLLVLLAAVPGIAAQLWFFG), 42 to 62 (GTLVQILLASVSALLAEALVL), 78 to 109 (ALLTGLLLAVSIPPLAPWWMVVLGTVFAVIIA), 123 to 143 (PAMIGYVVLLISFPVQMTSWL), and 148 to 168 (IAVNIPGFIDAIQVIFSGHTA). T187 carries the FMN phosphoryl threonine modification. 5 helical membrane passes run 214-234 (ILAGAGWQWVNLAWLAGGLWL), 242-262 (WHIPLSFLVTLALCATLGWLF), 267-287 (LAAPQIHLLSGATMLGAFFIL), 301-321 (LIFGALAGLLVWLIRSFGGYP), and 322-342 (DGVAFAVLLANITVPLIDYYT).

This sequence belongs to the NqrB/RnfD family. As to quaternary structure, the complex is composed of six subunits: RsxA, RsxB, RsxC, RsxD, RsxE and RsxG. Requires FMN as cofactor.

It is found in the cell inner membrane. Part of a membrane-bound complex that couples electron transfer with translocation of ions across the membrane. Required to maintain the reduced state of SoxR. This is Ion-translocating oxidoreductase complex subunit D from Escherichia coli (strain SE11).